Reading from the N-terminus, the 653-residue chain is Bifunctional lysine-specific demethylase and histidyl-hydroxylase NO66 (653 aa).

The segment covering 1-12 (MKKATTSAAAKS) has biased composition (low complexity). Disordered regions lie at residues 1–50 (MKKA…DMLA) and 65–137 (FDDD…LERT). Over residues 13-26 (QGNSKMQKNANNGT) the composition is skewed to polar residues. Ser-44 is modified (phosphoserine). The segment covering 72–86 (STSKKTQSGSAAAAK) has biased composition (low complexity). Ser-131 carries the phosphoserine modification. Phosphothreonine is present on Thr-137. The residue at position 138 (Ser-138) is a Phosphoserine. Positions 184–208 (AEPTEEGNNNNDEKETETIETHKAD) are disordered. The segment covering 194-208 (NDEKETETIETHKAD) has biased composition (basic and acidic residues). One can recognise a JmjC domain in the interval 300–450 (FYSDGCSIRL…NLLETLMPMV (151 aa)). Fe cation is bound by residues His-351, Asp-353, and His-416.

It belongs to the ROX family. NO66 subfamily. Fe(2+) is required as a cofactor.

Its subcellular location is the nucleus. The catalysed reaction is N(6),N(6)-dimethyl-L-lysyl(36)-[histone H3] + 2 2-oxoglutarate + 2 O2 = L-lysyl(36)-[histone H3] + 2 formaldehyde + 2 succinate + 2 CO2. In terms of biological role, oxygenase that can act as both a histone lysine demethylase and a ribosomal histidine hydroxylase. Specifically demethylates 'Lys-4' (H3K4me) and 'Lys-36' (H3K36me) of histone H3, thereby playing a central role in histone code. In Drosophila melanogaster (Fruit fly), this protein is Bifunctional lysine-specific demethylase and histidyl-hydroxylase NO66.